Reading from the N-terminus, the 411-residue chain is Putative competence-damage inducible protein (411 aa).

It belongs to the CinA family.

The chain is Putative competence-damage inducible protein from Caldicellulosiruptor saccharolyticus (strain ATCC 43494 / DSM 8903 / Tp8T 6331).